We begin with the raw amino-acid sequence, 1373 residues long: DNA-directed RNA polymerase subunit beta (1373 aa).

Belongs to the RNA polymerase beta chain family. The RNAP catalytic core consists of 2 alpha, 1 beta, 1 beta' and 1 omega subunit. When a sigma factor is associated with the core the holoenzyme is formed, which can initiate transcription.

It catalyses the reaction RNA(n) + a ribonucleoside 5'-triphosphate = RNA(n+1) + diphosphate. Its function is as follows. DNA-dependent RNA polymerase catalyzes the transcription of DNA into RNA using the four ribonucleoside triphosphates as substrates. In Lawsonia intracellularis (strain PHE/MN1-00), this protein is DNA-directed RNA polymerase subunit beta.